Here is a 122-residue protein sequence, read N- to C-terminus: Large ribosomal subunit protein uL14 (122 aa).

The protein belongs to the universal ribosomal protein uL14 family. As to quaternary structure, part of the 50S ribosomal subunit. Forms a cluster with proteins L3 and L19. In the 70S ribosome, L14 and L19 interact and together make contacts with the 16S rRNA in bridges B5 and B8.

Binds to 23S rRNA. Forms part of two intersubunit bridges in the 70S ribosome. This is Large ribosomal subunit protein uL14 from Protochlamydia amoebophila (strain UWE25).